Here is a 540-residue protein sequence, read N- to C-terminus: Chaperonin GroEL (540 aa).

ATP is bound by residues 30 to 33 (TLGP), K51, 87 to 91 (DGTTT), G415, 479 to 481 (NAA), and D495.

Belongs to the chaperonin (HSP60) family. As to quaternary structure, forms a cylinder of 14 subunits composed of two heptameric rings stacked back-to-back. Interacts with the co-chaperonin GroES.

The protein localises to the cytoplasm. The enzyme catalyses ATP + H2O + a folded polypeptide = ADP + phosphate + an unfolded polypeptide.. Functionally, together with its co-chaperonin GroES, plays an essential role in assisting protein folding. The GroEL-GroES system forms a nano-cage that allows encapsulation of the non-native substrate proteins and provides a physical environment optimized to promote and accelerate protein folding. The sequence is that of Chaperonin GroEL from Pluralibacter gergoviae (Enterobacter gergoviae).